Here is a 424-residue protein sequence, read N- to C-terminus: Enolase (424 aa).

Q162 is a (2R)-2-phosphoglycerate binding site. The active-site Proton donor is E204. Residues D241, E284, and D311 each coordinate Mg(2+). Residues K336, R365, S366, and K387 each coordinate (2R)-2-phosphoglycerate. K336 (proton acceptor) is an active-site residue.

This sequence belongs to the enolase family. Mg(2+) serves as cofactor.

Its subcellular location is the cytoplasm. The protein localises to the secreted. It localises to the cell surface. It carries out the reaction (2R)-2-phosphoglycerate = phosphoenolpyruvate + H2O. It functions in the pathway carbohydrate degradation; glycolysis; pyruvate from D-glyceraldehyde 3-phosphate: step 4/5. Catalyzes the reversible conversion of 2-phosphoglycerate (2-PG) into phosphoenolpyruvate (PEP). It is essential for the degradation of carbohydrates via glycolysis. This is Enolase from Rhizobium johnstonii (strain DSM 114642 / LMG 32736 / 3841) (Rhizobium leguminosarum bv. viciae).